Here is a 336-residue protein sequence, read N- to C-terminus: Retinol dehydrogenase 14 (336 aa).

Thr5 is modified (phosphothreonine). Residue 50-56 (GANSGLG) participates in NADP(+) binding. Substrate is bound at residue Ser192. Residue Tyr217 is the Proton acceptor of the active site.

Belongs to the short-chain dehydrogenases/reductases (SDR) family. In terms of tissue distribution, widely expressed.

It carries out the reaction all-trans-retinol + NADP(+) = all-trans-retinal + NADPH + H(+). It catalyses the reaction 9-cis-retinol + NADP(+) = 9-cis-retinal + NADPH + H(+). The enzyme catalyses 11-cis-retinol + NADP(+) = 11-cis-retinal + NADPH + H(+). It functions in the pathway cofactor metabolism; retinol metabolism. In terms of biological role, retinol dehydrogenase with a clear preference for NADP. Displays high activity towards 9-cis, 11-cis and all-trans-retinol. Shows a very weak activity towards 13-cis-retinol. Has no activity towards steroid. This Homo sapiens (Human) protein is Retinol dehydrogenase 14 (RDH14).